The chain runs to 123 residues: Protein Wnt-7a (123 aa).

The O-palmitoleoyl serine; by PORCN moiety is linked to residue S1. The segment at 33–61 is disordered linker; that stretch reads VEPVRASRNKRPTFLKIKKPLSYLKPMDT. A disulfide bridge links C89 with C104. N-linked (GlcNAc...) asparagine glycosylation is present at N90.

This sequence belongs to the Wnt family. Palmitoleoylation is required for efficient binding to frizzled receptors. Depalmitoleoylation leads to Wnt signaling pathway inhibition.

Its subcellular location is the secreted. The protein localises to the extracellular space. The protein resides in the extracellular matrix. Its function is as follows. Ligand for members of the frizzled family of seven transmembrane receptors that functions in the canonical Wnt/beta-catenin signaling pathway. Plays an important role in embryonic development, including dorsal versus ventral patterning during limb development, skeleton development and urogenital tract development. Required for central nervous system (CNS) angiogenesis and blood-brain barrier regulation. The protein is Protein Wnt-7a (WNT-7A) of Plethodon jordani (Red-cheeked salamander).